The primary structure comprises 661 residues: Peroxisomal acyl-coenzyme A oxidase 1 (661 aa).

Phosphoserine is present on Ser-26. Lys-65 is subject to N6-acetyllysine. An N6-succinyllysine mark is found at Lys-89 and Lys-90. FAD is bound at residue Thr-139. Lys-159 carries the N6-succinyllysine modification. Gly-178 lines the FAD pocket. The residue at position 216 (Lys-216) is an N6-acetyllysine. Position 241 is an N6-succinyllysine (Lys-241). An N6-acetyllysine mark is found at Lys-255, Lys-267, and Lys-272. Lys-349 carries the N6-succinyllysine modification. Catalysis depends on Glu-421, which acts as the Proton acceptor. N6-acetyllysine; alternate occurs at positions 437 and 446. 2 positions are modified to N6-succinyllysine; alternate: Lys-437 and Lys-446. Lys-500 carries the post-translational modification N6-acetyllysine. Lys-512 bears the N6-acetyllysine; alternate mark. Lys-512 is modified (N6-succinyllysine; alternate). Lys-542 carries the post-translational modification N6-succinyllysine. Lys-637 bears the N6-acetyllysine; alternate mark. Residue Lys-637 is modified to N6-succinyllysine; alternate. Lys-643 bears the N6-succinyllysine mark. A Phosphoserine modification is found at Ser-649. At Lys-652 the chain carries N6-acetyllysine. Lys-655 is modified (N6-succinyllysine). A Microbody targeting signal motif is present at residues 659-661 (SKL).

Belongs to the acyl-CoA oxidase family. Homodimer. The enzyme contains three components A, B and C, the latter two being produced from the first by a proteolytic cleavage. Interacts with LONP2. The cofactor is FAD. Expressed in Schwann cells. Expressed (at protein level) in liver.

It is found in the peroxisome. The enzyme catalyses a 2,3-saturated acyl-CoA + O2 = a (2E)-enoyl-CoA + H2O2. The catalysed reaction is hexadecanoyl-CoA + O2 = (2E)-hexadecenoyl-CoA + H2O2. It carries out the reaction dodecanoyl-CoA + O2 = (2E)-dodecenoyl-CoA + H2O2. It catalyses the reaction octanoyl-CoA + O2 = (2E)-octenoyl-CoA + H2O2. The enzyme catalyses decanoyl-CoA + O2 = (2E)-decenoyl-CoA + H2O2. The catalysed reaction is tetradecanoyl-CoA + O2 = (2E)-tetradecenoyl-CoA + H2O2. It carries out the reaction hexadecanedioyl-CoA + O2 = (2E)-hexadecenedioyl-CoA + H2O2. It catalyses the reaction tetracosanoyl-CoA + O2 = (2E)-tetracosenoyl-CoA + H2O2. The enzyme catalyses glutaryl-CoA + O2 = (2E)-glutaconyl-CoA + H2O2. The catalysed reaction is hexanoyl-CoA + O2 = (2E)-hexenoyl-CoA + H2O2. It carries out the reaction octadecanoyl-CoA + O2 = (2E)-octadecenoyl-CoA + H2O2. It catalyses the reaction (5Z,8Z,11Z,14Z,17Z)-eicosapentaenoyl-CoA + O2 = (2E,5Z,8Z,11Z,14Z,17Z)-icosahexaenoyl-CoA + H2O2. The enzyme catalyses (6Z,9Z,12Z,15Z,18Z,21Z)-tetracosahexaenoyl-CoA + O2 = (2E,6Z,9Z,12Z,15Z,18Z,21Z)-tetracosaheptaenoyl-CoA + H2O2. It participates in lipid metabolism; peroxisomal fatty acid beta-oxidation. In terms of biological role, involved in the initial and rate-limiting step of peroxisomal beta-oxidation of straight-chain saturated and unsaturated very-long-chain fatty acids. Catalyzes the desaturation of fatty acyl-CoAs such as palmitoyl-CoA (hexadecanoyl-CoA) to 2-trans-enoyl-CoAs ((2E)-enoyl-CoAs) such as (2E)-hexadecenoyl-CoA, and donates electrons directly to molecular oxygen (O(2)), thereby producing hydrogen peroxide (H(2)O(2)). Its function is as follows. Shows highest activity against medium-chain fatty acyl-CoAs. Shows optimum activity with a chain length of 10 carbons (decanoyl-CoA) in vitro. Is active against a much broader range of substrates and shows activity towards long-chain acyl-CoAs. The chain is Peroxisomal acyl-coenzyme A oxidase 1 from Rattus norvegicus (Rat).